The sequence spans 204 residues: Methylthioribulose-1-phosphate dehydratase (204 aa).

Zn(2+)-binding residues include His-94 and His-96.

This sequence belongs to the aldolase class II family. MtnB subfamily. It depends on Zn(2+) as a cofactor.

It catalyses the reaction 5-(methylsulfanyl)-D-ribulose 1-phosphate = 5-methylsulfanyl-2,3-dioxopentyl phosphate + H2O. It participates in amino-acid biosynthesis; L-methionine biosynthesis via salvage pathway; L-methionine from S-methyl-5-thio-alpha-D-ribose 1-phosphate: step 2/6. Catalyzes the dehydration of methylthioribulose-1-phosphate (MTRu-1-P) into 2,3-diketo-5-methylthiopentyl-1-phosphate (DK-MTP-1-P). This chain is Methylthioribulose-1-phosphate dehydratase, found in Cronobacter sakazakii (strain ATCC BAA-894) (Enterobacter sakazakii).